A 69-amino-acid polypeptide reads, in one-letter code: Disintegrin EMF10A (69 aa).

Residues 1 to 66 (MNSANPCCDP…DCPRNPWKSE (66 aa)) enclose the Disintegrin domain. Intrachain disulfides connect Cys-7-Cys-30, Cys-21-Cys-27, Cys-26-Cys-51, and Cys-39-Cys-58. The Cell attachment site signature appears at 43–45 (RGD).

Belongs to the disintegrin family. Dimeric disintegrin subfamily. As to quaternary structure, heterodimer with EMF10B; disulfide-linked. As to expression, expressed by the venom gland.

Its subcellular location is the secreted. Functionally, extremely potent and selective inhibitor of integrin alpha-5/beta-1 (ITGA5/ITGB1). Partially inhibits adhesion of cells expressing alpha-IIb/beta-3 (ITGA2B/ITGB3), alpha-V/beta-3 (ITGAV/ITGB3), and alpha-4/beta-1 (ITGA4/ITGB1) to appropriate ligands only at concentration higher than 500 nM. Weakly inhibits ADP-induced platelet aggregation. This chain is Disintegrin EMF10A, found in Eristicophis macmahoni (Leaf-nosed viper).